The primary structure comprises 247 residues: MLSTALPQNKKGWQAMLDLRFQRLHGKTTLTTRHHVGLLTVQRPFYPEEETCHLCLLHPPGGIVGGDELIINAIIDSDCHTLITMPGASKFYRSSGAQAHLQQNLTLCNNATLEWLPQDSIFFPGAHATLHTVFHLSSSSTLLAWDLLCLGRPVIGETFSHGTLANRLEIWVDGSPLLIERLHVANGELTCVARKPWVGTMLFYLGNETQLEDIREKLTPLENYAGATLTDGLLTVRFLSDDNLRCQ.

The protein belongs to the UreD family. As to quaternary structure, ureD, UreF and UreG form a complex that acts as a GTP-hydrolysis-dependent molecular chaperone, activating the urease apoprotein by helping to assemble the nickel containing metallocenter of UreC. The UreE protein probably delivers the nickel.

The protein resides in the cytoplasm. In terms of biological role, required for maturation of urease via the functional incorporation of the urease nickel metallocenter. This is Putative urease accessory protein UreD homolog from Escherichia coli O157:H7.